The chain runs to 463 residues: Glycine--tRNA ligase (463 aa).

Residue Arg-102 coordinates substrate. The disordered stretch occupies residues 113–134 (KHGHPPPNGLADIRDPDTGEPG). Glu-165 is a substrate binding site. Residues 197–199 (RNE), 207–212 (FRTREF), 284–285 (EL), and 328–331 (GLTR) each bind ATP. Residue 212 to 216 (FEQME) coordinates substrate. Substrate is bound at residue 324–328 (EPAAG).

The protein belongs to the class-II aminoacyl-tRNA synthetase family. As to quaternary structure, homodimer.

The protein resides in the cytoplasm. It catalyses the reaction tRNA(Gly) + glycine + ATP = glycyl-tRNA(Gly) + AMP + diphosphate. In terms of biological role, catalyzes the attachment of glycine to tRNA(Gly). This chain is Glycine--tRNA ligase, found in Mycolicibacterium paratuberculosis (strain ATCC BAA-968 / K-10) (Mycobacterium paratuberculosis).